Reading from the N-terminus, the 91-residue chain is Small ribosomal subunit protein bS20 (91 aa).

Residues 1–23 (MANTPSAKKRAKQAEKRRSHNAS) are disordered. The span at 7–20 (AKKRAKQAEKRRSH) shows a compositional bias: basic residues.

The protein belongs to the bacterial ribosomal protein bS20 family.

Its function is as follows. Binds directly to 16S ribosomal RNA. This chain is Small ribosomal subunit protein bS20, found in Pseudomonas paraeruginosa (strain DSM 24068 / PA7) (Pseudomonas aeruginosa (strain PA7)).